The primary structure comprises 194 residues: Cysteine and glycine-rich protein 2 (194 aa).

Positions 10 to 61 constitute an LIM zinc-binding 1 domain; sequence CGACGRTVYHAEEVQCDGRSFHRCCFLCMVCRKNLDSTTVAIHDAEVYCKSC. A Nuclear localization signal motif is present at residues 64–69; it reads KKYGPK. The region spanning 120–171 is the LIM zinc-binding 2 domain; sequence CSRCGDSVYAAEKVIGAGKPWHKNCFRCAKCGKSLESTTLTEKEGEIYCKGC.

It localises to the nucleus. In terms of biological role, totally down-regulated in transformed cells. May therefore take part in the control of cell growth and differentiation. The sequence is that of Cysteine and glycine-rich protein 2 (CSRP2) from Gallus gallus (Chicken).